A 515-amino-acid polypeptide reads, in one-letter code: MSSASVVEAVSVNSAIPQNRNYEYVLEVANVRKEFPGVVALDNVSLRIRPGTVHALMGENGAGKSTLMKIIAGIYQPDKGQVLLRGEPVRLEKPLDAQEAGIAMIHQELLLMNPMTVAENIWIRREPKGRFGLIDHDEMRRRTQELFDRLNINLDPEAEISELSVASRQMVEIAKAVSFNSDVLIMDEPTSAITETEVAHLFDIIRDLRAKGIGIVYITHKMNELFEIADEFSVFRDGQYIGTHLSSNVTRDDIIRMMVGREVSQMFPKEEVALGDVVLSVKNLSREGVFRNVSFDVRAGEIVGFAGLVGSGRSNVAEALFGVAPADGGAIQINGEFVQIKSPNEAIQHGMAFLTEDRKETGCFLPLTIQENIQSAVLHQNFVKKGFVAEAELAKEAVEICNKLRVKTPGMDEVIENLSGGNQQKVLIGRWLLTHPKILILDEPTRGIDVGAKAEIHSLITQLAHKGVAVVMISSELPEILGMSDRVVVMHEGRVTGILDRAEADQVKIMDLAAQ.

ABC transporter domains are found at residues 26–262 (LEVA…VGRE) and 272–511 (VALG…KIMD). 58–65 (GENGAGKS) is a binding site for ATP.

Belongs to the ABC transporter superfamily. Carbohydrate importer 2 (CUT2) (TC 3.A.1.2) family.

It localises to the cell inner membrane. It carries out the reaction D-ribose(out) + ATP + H2O = D-ribose(in) + ADP + phosphate + H(+). It catalyses the reaction D-galactose(out) + ATP + H2O = D-galactose(in) + ADP + phosphate + H(+). Functionally, part of an ABC transporter complex involved in carbohydrate import. Could be involved in ribose, galactose and/or methyl galactoside import. Responsible for energy coupling to the transport system. In Hahella chejuensis (strain KCTC 2396), this protein is Putative ribose/galactose/methyl galactoside import ATP-binding protein.